The chain runs to 267 residues: RWD domain-containing protein 3 (267 aa).

The RWD domain occupies 7-114; sequence QELSALAAIF…LWIQQNLRLV (108 aa). Interaction with UBE2I/UBC9 regions lie at residues 13–15 and 100–102; these read AAI and VHE.

Interacts with UBE2I/UBC9, NFKBIA, HIF1A and NCOA2.

The protein resides in the nucleus. The protein localises to the cytoplasm. Enhancer of SUMO conjugation. Via its interaction with UBE2I/UBC9, increases SUMO conjugation to proteins by promoting the binding of E1 and E2 enzymes, thioester linkage between SUMO and UBE2I/UBC9 and transfer of SUMO to specific target proteins which include HIF1A, PIAS, NFKBIA, NR3C1 and TOP1. Positively regulates the NF-kappa-B signaling pathway by enhancing the sumoylation of NF-kappa-B inhibitor alpha (NFKBIA), promoting its stabilization which consequently leads to an increased inhibition of NF-kappa-B transcriptional activity. Negatively regulates the hypoxia-inducible factor-1 alpha (HIF1A) signaling pathway by increasing the sumoylation of HIF1A, promoting its stabilization, transcriptional activity and the expression of its target gene VEGFA during hypoxia. Has no effect on ubiquitination. This Mus musculus (Mouse) protein is RWD domain-containing protein 3 (Rwdd3).